Consider the following 1045-residue polypeptide: Suppression of tumorigenicity 18 protein (1045 aa).

3 disordered regions span residues 38-90 (KKRR…NDHA), 158-228 (KAES…YNRK), and 340-364 (PRVT…RREA). Over residues 52–63 (NKRKSLLMKPRH) the composition is skewed to basic residues. Basic and acidic residues-rich tracts occupy residues 69 to 90 (GCKE…NDHA) and 159 to 177 (AESD…NGRD). 6 consecutive CCHHC-type zinc fingers follow at residues 357–400 (PRPE…PLEI), 401–444 (LAMH…KLAM), 713–756 (RDLK…LKSL), 757–800 (MAAN…GIKM), 805–848 (EEKE…QKEN), and 858–901 (KLNK…IKKV). 24 residues coordinate Zn(2+): Cys-366, Cys-371, His-384, Cys-390, Cys-410, Cys-415, His-428, Cys-434, Cys-722, Cys-727, His-740, Cys-746, Cys-766, Cys-771, His-784, Cys-790, Cys-814, Cys-819, His-832, Cys-838, Cys-867, Cys-872, His-885, and Cys-891. Positions 918-987 (IDGDEEIRHL…KELAGLSQAL (70 aa)) form a coiled coil.

This sequence belongs to the MYT1 family.

The protein resides in the nucleus. In terms of biological role, repressor that binds to DNA sequences containing a bipartite element consisting of a direct repeat of the sequence 5'-AAAGTTT-3' separated by 2-9 nucleotides. Represses basal transcription activity from target promoters. The chain is Suppression of tumorigenicity 18 protein (St18) from Mus musculus (Mouse).